Reading from the N-terminus, the 544-residue chain is MAAKEVKFGRDARERLLRGVDILADAVKVTLGPKGRNVVIDKSFGAPRITKDGVSVAKEIELENKFENMGAQMLREVASKTNDIAGDGTTTATVLGQAIVQEGVKAVAASMNPMDLKRGIDAAVEAVVADLFKKAKKIQTSEEIAQVATISANGAEDIGKMIADAMEKVGNEGVITVEEAKTAETELEVVEGMQFDRGYLSPYFVTNSEKMMVDLDDPYILIHEKKLSNLQSLLPVLEAVAQSGKPLLIIAEDVEGEALATLVVNKLRGGLKIAAVKAPGFGDRRKAMLEDIAVLTSGQVISEDVGIKLENVTLEMLGRAKKVHVSKETTTIVDGAGQKSEINARVSQIKAQIEETTSDYDREKLQERLAKLAGGVAVIRVGGSTEVEVKEKKDRVDDALNATRAAVEEGIVPGGGTPLLRAAKALSIKGKNPDQEAGIGIIRRALQAPARQIAHNAGEEAAVIVGKVLENCSDTFGYNTATAQFRDLISFGIVDPVKVVRSALQNAASIASLLITTEAMVAEVPKKEAAAPAMPGGGMGGMDF.

ATP contacts are provided by residues 30-33 (TLGP), K51, 87-91 (DGTTT), G415, and D495.

The protein belongs to the chaperonin (HSP60) family. In terms of assembly, forms a cylinder of 14 subunits composed of two heptameric rings stacked back-to-back. Interacts with the co-chaperonin GroES.

It localises to the cytoplasm. It catalyses the reaction ATP + H2O + a folded polypeptide = ADP + phosphate + an unfolded polypeptide.. Its function is as follows. Together with its co-chaperonin GroES, plays an essential role in assisting protein folding. The GroEL-GroES system forms a nano-cage that allows encapsulation of the non-native substrate proteins and provides a physical environment optimized to promote and accelerate protein folding. The chain is Chaperonin GroEL from Bartonella bacilliformis.